A 737-amino-acid polypeptide reads, in one-letter code: Catalase-peroxidase (737 aa).

Positions 1–23 (MLKKILPVLITLAIVHNTPTAWA) are cleaved as a signal peptide. The tryptophyl-tyrosyl-methioninium (Trp-Tyr) (with M-249) cross-link spans 102 to 223 (WHGAGTYRIY…LAATQMGLIY (122 aa)). Catalysis depends on histidine 103, which acts as the Proton acceptor. Positions 223–249 (YVNPEGPNGKPDPVAAAKDIREAFARM) form a cross-link, tryptophyl-tyrosyl-methioninium (Tyr-Met) (with W-102). Histidine 264 serves as a coordination point for heme b.

It belongs to the peroxidase family. Peroxidase/catalase subfamily. In terms of assembly, homodimer or homotetramer. Heme b serves as cofactor. Post-translationally, formation of the three residue Trp-Tyr-Met cross-link is important for the catalase, but not the peroxidase activity of the enzyme.

The enzyme catalyses H2O2 + AH2 = A + 2 H2O. It catalyses the reaction 2 H2O2 = O2 + 2 H2O. Functionally, bifunctional enzyme with both catalase and broad-spectrum peroxidase activity. In Yersinia pseudotuberculosis serotype I (strain IP32953), this protein is Catalase-peroxidase.